A 179-amino-acid chain; its full sequence is Large ribosomal subunit protein uL5 (179 aa).

It belongs to the universal ribosomal protein uL5 family. Part of the 50S ribosomal subunit; part of the 5S rRNA/L5/L18/L25 subcomplex. Contacts the 5S rRNA and the P site tRNA. Forms a bridge to the 30S subunit in the 70S ribosome.

In terms of biological role, this is one of the proteins that bind and probably mediate the attachment of the 5S RNA into the large ribosomal subunit, where it forms part of the central protuberance. In the 70S ribosome it contacts protein S13 of the 30S subunit (bridge B1b), connecting the 2 subunits; this bridge is implicated in subunit movement. Contacts the P site tRNA; the 5S rRNA and some of its associated proteins might help stabilize positioning of ribosome-bound tRNAs. The chain is Large ribosomal subunit protein uL5 from Haemophilus influenzae (strain 86-028NP).